Reading from the N-terminus, the 461-residue chain is MDQSSRYANLNLKESDLIAGGRHVLCAYIMKPKDGFGNFLQTAAHFSAESSTGTNVEVSTTDDFTRGVDALVYEIDEANNVMKIAYPIELFDRNVIDGRAMIASFLTLTIGNNQGMGDVEYAKMHDFYVPPAYLRLFDGPSTTIRDLWRVLGRPVVDGGFIVGTIIKPKLGLRPQPFADACYDFWLGGDFIKNDEPQGNQVFAPFKETVRAVNEAMRRAQDKTGEPKLFSFNITADDHYEMVARGEYILETFADNADHVAFLVDGYVAGPAAVTTARRAFPKQYLHYHRAGHGAVTSPQSKRGYTAFVLSKMARLQGASGIHTGTMGFGKMEGEAADRAMAYMITEDSADGPFFHQEWLGMNPTTPIISGGMNALRMPGFFDNLGHSNLIMTAGGGAFGHIDGGAAGAKSLRQAEQCWKAGADPVEFAKDHREFARAFESFPHDADALYPNWRNSLKLAAA.

Residue asparagine 112 coordinates substrate. Lysine 167 acts as the Proton acceptor in catalysis. Position 169 (lysine 169) interacts with substrate. Mg(2+) contacts are provided by lysine 192, aspartate 194, and glutamate 195. Lysine 192 is subject to N6-carboxylysine. Histidine 288 (proton acceptor) is an active-site residue. Substrate is bound by residues arginine 289, histidine 322, and serine 369.

Belongs to the RuBisCO large chain family. Type II subfamily. In terms of assembly, homodimer. Requires Mg(2+) as cofactor.

It catalyses the reaction 2 (2R)-3-phosphoglycerate + 2 H(+) = D-ribulose 1,5-bisphosphate + CO2 + H2O. The catalysed reaction is D-ribulose 1,5-bisphosphate + O2 = 2-phosphoglycolate + (2R)-3-phosphoglycerate + 2 H(+). Functionally, ruBisCO catalyzes two reactions: the carboxylation of D-ribulose 1,5-bisphosphate, the primary event in carbon dioxide fixation, as well as the oxidative fragmentation of the pentose substrate. Both reactions occur simultaneously and in competition at the same active site. This is Ribulose bisphosphate carboxylase from Rhodopseudomonas palustris (strain HaA2).